The following is a 205-amino-acid chain: DUF724 domain-containing protein 4 (205 aa).

The disordered stretch occupies residues 28-59 (DASGRGKRRRVEQEHHSDLNNETAAPTGGSAG). The region spanning 63-189 (VLPFTKTLAS…MADDYSKLKK (127 aa)) is the DUF724 domain.

In terms of tissue distribution, expressed in roots, leaves, stems, flowers and siliques.

Its subcellular location is the nucleus. Functionally, may be involved in the polar growth of plant cells via transportation of RNAs. This is DUF724 domain-containing protein 4 from Arabidopsis thaliana (Mouse-ear cress).